A 349-amino-acid polypeptide reads, in one-letter code: tRNA pseudouridine synthase D (349 aa).

Phenylalanine 27 is a substrate binding site. Aspartate 80 (nucleophile) is an active-site residue. A substrate-binding site is contributed by asparagine 129. The TRUD domain maps to 155–303 (GVPNYFGPQR…VEAARRAMLL (149 aa)). Phenylalanine 329 provides a ligand contact to substrate.

This sequence belongs to the pseudouridine synthase TruD family.

The catalysed reaction is uridine(13) in tRNA = pseudouridine(13) in tRNA. In terms of biological role, responsible for synthesis of pseudouridine from uracil-13 in transfer RNAs. This Cronobacter sakazakii (strain ATCC BAA-894) (Enterobacter sakazakii) protein is tRNA pseudouridine synthase D.